The following is a 378-amino-acid chain: 3-dehydroquinate synthase (378 aa).

NAD(+)-binding positions include 111–115 (GVIGD), 135–136 (TS), Lys-148, and Lys-157. Positions 190, 252, and 271 each coordinate Zn(2+).

It belongs to the sugar phosphate cyclases superfamily. Dehydroquinate synthase family. It depends on NAD(+) as a cofactor. The cofactor is Co(2+). Zn(2+) is required as a cofactor.

It localises to the cytoplasm. It catalyses the reaction 7-phospho-2-dehydro-3-deoxy-D-arabino-heptonate = 3-dehydroquinate + phosphate. The protein operates within metabolic intermediate biosynthesis; chorismate biosynthesis; chorismate from D-erythrose 4-phosphate and phosphoenolpyruvate: step 2/7. Functionally, catalyzes the conversion of 3-deoxy-D-arabino-heptulosonate 7-phosphate (DAHP) to dehydroquinate (DHQ). The protein is 3-dehydroquinate synthase of Mesorhizobium japonicum (strain LMG 29417 / CECT 9101 / MAFF 303099) (Mesorhizobium loti (strain MAFF 303099)).